The primary structure comprises 415 residues: Adipocyte plasma membrane-associated protein (415 aa).

Residues Met-1–Arg-39 are Cytoplasmic-facing. The chain crosses the membrane as a helical span at residues Val-40–Leu-60. The Extracellular portion of the chain corresponds to Glu-61–Leu-412. A glycan (N-linked (GlcNAc...) asparagine) is linked at Asn-159.

The protein belongs to the strictosidine synthase family.

The protein localises to the membrane. In Danio rerio (Zebrafish), this protein is Adipocyte plasma membrane-associated protein (apmap).